The sequence spans 225 residues: Large ribosomal subunit protein bL25 (225 aa).

Positions 206–225 (EDSKNKITKDNETNKDKSNL) are disordered.

The protein belongs to the bacterial ribosomal protein bL25 family. CTC subfamily. Part of the 50S ribosomal subunit; part of the 5S rRNA/L5/L18/L25 subcomplex. Contacts the 5S rRNA. Binds to the 5S rRNA independently of L5 and L18.

In terms of biological role, this is one of the proteins that binds to the 5S RNA in the ribosome where it forms part of the central protuberance. This chain is Large ribosomal subunit protein bL25, found in Vesicomyosocius okutanii subsp. Calyptogena okutanii (strain HA).